The chain runs to 164 residues: Peptide deformylase (164 aa).

2 residues coordinate Fe cation: cysteine 87 and histidine 129. Glutamate 130 is an active-site residue. Histidine 133 contributes to the Fe cation binding site.

It belongs to the polypeptide deformylase family. Fe(2+) is required as a cofactor.

It carries out the reaction N-terminal N-formyl-L-methionyl-[peptide] + H2O = N-terminal L-methionyl-[peptide] + formate. Removes the formyl group from the N-terminal Met of newly synthesized proteins. Requires at least a dipeptide for an efficient rate of reaction. N-terminal L-methionine is a prerequisite for activity but the enzyme has broad specificity at other positions. The polypeptide is Peptide deformylase (Thermotoga maritima (strain ATCC 43589 / DSM 3109 / JCM 10099 / NBRC 100826 / MSB8)).